A 339-amino-acid polypeptide reads, in one-letter code: tRNA N6-adenosine threonylcarbamoyltransferase (339 aa).

Fe cation is bound by residues His-114 and His-118. Residues 137-141 (VVSGG), Asp-170, Gly-183, Asp-187, and Asn-277 each bind substrate. Asp-305 is a Fe cation binding site.

This sequence belongs to the KAE1 / TsaD family. It depends on Fe(2+) as a cofactor.

The protein resides in the cytoplasm. The catalysed reaction is L-threonylcarbamoyladenylate + adenosine(37) in tRNA = N(6)-L-threonylcarbamoyladenosine(37) in tRNA + AMP + H(+). In terms of biological role, required for the formation of a threonylcarbamoyl group on adenosine at position 37 (t(6)A37) in tRNAs that read codons beginning with adenine. Is involved in the transfer of the threonylcarbamoyl moiety of threonylcarbamoyl-AMP (TC-AMP) to the N6 group of A37, together with TsaE and TsaB. TsaD likely plays a direct catalytic role in this reaction. The polypeptide is tRNA N6-adenosine threonylcarbamoyltransferase (Clostridium beijerinckii (strain ATCC 51743 / NCIMB 8052) (Clostridium acetobutylicum)).